The chain runs to 429 residues: MKERIIQPVNSGLNGNITIPGDKSISHRAVMFGAIAEGKTTIKGFLPGADCLSTISCFKEMGVDIVQNGDEVTVVGKGLEGLQEPKAVLDVGNSGTTIRLMSGILANTPFFSCVQGDASIAKRPMKRVTNPLKQMGANIDGREEGTFTPLTIRGGDLKAIEYNSPVASAQVKSAILLAGLRAEGVTAVTEPHISRDHTERMLEAFGVKVTREGKTVKLAGGQKLTATDVQVPGDVSSAAFFLVAGAIIPNSKLVLENVGMNPTRTGIIDVLEKMGATFTVEPINEGASEPAANITIETSSLKGIEIGGDIIPRLIDEIPVIALAATQAEGITVIKDAHELKVKETNRIDTVVAELTKLGARIEATDDGMIIYGKSALKGNTVNSYGDHRIGMMLAIAGCIAEGKTIIEDAEAVGVSYPTFFEELQKLTK.

Residues Lys-23, Ser-24, and Arg-28 each contribute to the 3-phosphoshikimate site. Position 23 (Lys-23) interacts with phosphoenolpyruvate. The phosphoenolpyruvate site is built by Gly-95 and Arg-123. 3-phosphoshikimate-binding residues include Ser-168, Gln-170, Asp-316, and Lys-343. Gln-170 lines the phosphoenolpyruvate pocket. Catalysis depends on Asp-316, which acts as the Proton acceptor. Phosphoenolpyruvate contacts are provided by Arg-347 and Arg-389.

It belongs to the EPSP synthase family. Monomer.

Its subcellular location is the cytoplasm. The catalysed reaction is 3-phosphoshikimate + phosphoenolpyruvate = 5-O-(1-carboxyvinyl)-3-phosphoshikimate + phosphate. It participates in metabolic intermediate biosynthesis; chorismate biosynthesis; chorismate from D-erythrose 4-phosphate and phosphoenolpyruvate: step 6/7. In terms of biological role, catalyzes the transfer of the enolpyruvyl moiety of phosphoenolpyruvate (PEP) to the 5-hydroxyl of shikimate-3-phosphate (S3P) to produce enolpyruvyl shikimate-3-phosphate and inorganic phosphate. In Bacillus thuringiensis (strain Al Hakam), this protein is 3-phosphoshikimate 1-carboxyvinyltransferase.